Reading from the N-terminus, the 261-residue chain is Pantothenate synthetase (261 aa).

An ATP-binding site is contributed by 29–36; that stretch reads MGALHNGH. H36 serves as the catalytic Proton donor. Q60 is a binding site for (R)-pantoate. Q60 is a beta-alanine binding site. 147–150 is a binding site for ATP; the sequence is GEKD. Position 153 (Q153) interacts with (R)-pantoate. 184–187 lines the ATP pocket; sequence LSSR.

It belongs to the pantothenate synthetase family. In terms of assembly, homodimer.

It is found in the cytoplasm. It catalyses the reaction (R)-pantoate + beta-alanine + ATP = (R)-pantothenate + AMP + diphosphate + H(+). It participates in cofactor biosynthesis; (R)-pantothenate biosynthesis; (R)-pantothenate from (R)-pantoate and beta-alanine: step 1/1. Its function is as follows. Catalyzes the condensation of pantoate with beta-alanine in an ATP-dependent reaction via a pantoyl-adenylate intermediate. This Francisella tularensis subsp. holarctica (strain FTNF002-00 / FTA) protein is Pantothenate synthetase.